We begin with the raw amino-acid sequence, 254 residues long: Probable glutathione transferase omega-2 (254 aa).

Residues 25–105 (GTIRIYNMRY…YLDDIYPEPR (81 aa)) enclose the GST N-terminal domain. The Nucleophile role is filled by Cys35. Residues Lys62, Val75, and 89–90 (ES) each bind glutathione. The region spanning 110–239 (DHYEKVQQKL…SQPTETAVEF (130 aa)) is the GST C-terminal domain.

The protein belongs to the GST superfamily. Omega family.

The enzyme catalyses RX + glutathione = an S-substituted glutathione + a halide anion + H(+). It carries out the reaction L-dehydroascorbate + 2 glutathione = glutathione disulfide + L-ascorbate. It catalyses the reaction methylarsonate + 2 glutathione + H(+) = methylarsonous acid + glutathione disulfide + H2O. In terms of biological role, exhibits glutathione-dependent thiol transferase activity. Has dehydroascorbate reductase activity and may contribute to the recycling of ascorbic acid. Participates in the biotransformation of inorganic arsenic and reduces monomethylarsonic acid (MMA). This chain is Probable glutathione transferase omega-2 (gsto-2), found in Caenorhabditis elegans.